The following is a 100-amino-acid chain: Urease subunit gamma (100 aa).

It belongs to the urease gamma subunit family. In terms of assembly, heterotrimer of UreA (gamma), UreB (beta) and UreC (alpha) subunits. Three heterotrimers associate to form the active enzyme.

Its subcellular location is the cytoplasm. It catalyses the reaction urea + 2 H2O + H(+) = hydrogencarbonate + 2 NH4(+). The protein operates within nitrogen metabolism; urea degradation; CO(2) and NH(3) from urea (urease route): step 1/1. This is Urease subunit gamma from Synechococcus sp. (strain CC9902).